A 281-amino-acid polypeptide reads, in one-letter code: 2-dehydro-3-deoxyphosphooctonate aldolase (281 aa).

It belongs to the KdsA family.

Its subcellular location is the cytoplasm. It carries out the reaction D-arabinose 5-phosphate + phosphoenolpyruvate + H2O = 3-deoxy-alpha-D-manno-2-octulosonate-8-phosphate + phosphate. It functions in the pathway carbohydrate biosynthesis; 3-deoxy-D-manno-octulosonate biosynthesis; 3-deoxy-D-manno-octulosonate from D-ribulose 5-phosphate: step 2/3. Its pathway is bacterial outer membrane biogenesis; lipopolysaccharide biosynthesis. This chain is 2-dehydro-3-deoxyphosphooctonate aldolase, found in Psychromonas ingrahamii (strain DSM 17664 / CCUG 51855 / 37).